A 1529-amino-acid polypeptide reads, in one-letter code: MRGVGWQMLSLSLGLVLAILNKVAPQACPAQCSCSGSTVDCHGLALRSVPRNIPRNTERLDLNGNNITRITKTDFAGLRHLRVLQLMENKISTIERGAFQDLKELERLRLNRNHLQLFPELLFLGTAKLYRLDLSENQIQAIPRKAFRGAVDIKNLQLDYNQISCIEDGAFRALRDLEVLTLNNNNITRLSVASFNHMPKLRTFRLHSNNLYCDCHLAWLSDWLRQRPRVGLYTQCMGPSHLRGHNVAEVQKREFVCSGHQSFMAPSCSVLHCPAACTCSNNIVDCRGKGLTEIPTNLPETITEIRLEQNTIKVIPPGAFSPYKKLRRIDLSNNQISELAPDAFQGLRSLNSLVLYGNKITELPKSLFEGLFSLQLLLLNANKINCLRVDAFQDLHNLNLLSLYDNKLQTIAKGTFSPLRAIQTMHLAQNPFICDCHLKWLADYLHTNPIETSGARCTSPRRLANKRIGQIKSKKFRCSAKEQYFIPGTEDYRSKLSGDCFADLACPEKCRCEGTTVDCSNQKLNKIPEHIPQYTAELRLNNNEFTVLEATGIFKKLPQLRKINFSNNKITDIEEGAFEGASGVNEILLTSNRLENVQHKMFKGLESLKTLMLRSNRITCVGNDSFIGLSSVRLLSLYDNQITTVAPGAFDTLHSLSTLNLLANPFNCNCYLAWLGEWLRKKRIVTGNPRCQKPYFLKEIPIQDVAIQDFTCDDGNDDNSCSPLSRCPTECTCLDTVVRCSNKGLKVLPKGIPRDVTELYLDGNQFTLVPKELSNYKHLTLIDLSNNRISTLSNQSFSNMTQLLTLILSYNRLRCIPPRTFDGLKSLRLLSLHGNDISVVPEGAFNDLSALSHLAIGANPLYCDCNMQWLSDWVKSEYKEPGIARCAGPGEMADKLLLTTPSKKFTCQGPVDVNILAKCNPCLSNPCKNDGTCNSDPVDFYRCTCPYGFKGQDCDVPIHACISNPCKHGGTCHLKEGEEDGFWCICADGFEGENCEVNVDDCEDNDCENNSTCVDGINNYTCLCPPEYTGELCEEKLDFCAQDLNPCQHDSKCILTPKGFKCDCTPGYVGEHCDIDFDDCQDNKCKNGAHCTDAVNGYTCICPEGYSGLFCEFSPPMVLPRTSPCDNFDCQNGAQCIVRINEPICQCLPGYQGEKCEKLVSVNFINKESYLQIPSAKVRPQTNITLQIATDEDSGILLYKGDKDHIAVELYRGRVRASYDTGSHPASAIYSVETINDGNFHIVELLALDQSLSLSVDGGNPKIITNLSKQSTLNFDSPLYVGGMPGKSNVASLRQAPGQNGTSFHGCIRNLYINSELQDFQKVPMQTGILPGCEPCHKKVCAHGTCQPSSQAGFTCECQEGWMGPLCDQRTNDPCLGNKCVHGTCLPINAFSYSCKCLEGHGGVLCDEEEDLFNPCQAIKCKHGKCRLSGLGQPYCECSSGYTGDSCDREISCRGERIRDYYQKQQGYAACQTTKKVSRLECRGGCAGGQCCGPLRSKRRKYSFECTDGSSFVDEVEKVVKCGCTRCVS.

The first 30 residues, 1 to 30 (MRGVGWQMLSLSLGLVLAILNKVAPQACPA), serve as a signal peptide directing secretion. The 25-residue stretch at 31-55 (QCSCSGSTVDCHGLALRSVPRNIPR) folds into the LRRNT domain. LRR repeat units follow at residues 56–77 (NTER…DFAG), 80–101 (HLRV…AFQD), 104–125 (ELER…LFLG), 128–149 (KLYR…AFRG), 152–173 (DIKN…AFRA), and 176–197 (DLEV…SFNH). Asparagine 66 is a glycosylation site (N-linked (GlcNAc...) asparagine). An N-linked (GlcNAc...) asparagine glycan is attached at asparagine 186. One can recognise an LRRCT 1 domain in the interval 209 to 259 (NNLYCDCHLAWLSDWLRQRPRVGLYTQCMGPSHLRGHNVAEVQKREFVCSG). The 37-residue stretch at 264–300 (MAPSCSVLHCPAACTCSNNIVDCRGKGLTEIPTNLPE) folds into the LRRNT 2 domain. Cysteine 277 and cysteine 286 are joined by a disulfide. LRR repeat units lie at residues 301 to 322 (TITE…AFSP), 325 to 346 (KLRR…AFQG), 349 to 370 (SLNS…LFEG), 373 to 394 (SLQL…AFQD), and 397 to 418 (NLNL…TFSP). The LRRCT 2 domain maps to 430 to 480 (NPFICDCHLKWLADYLHTNPIETSGARCTSPRRLANKRIGQIKSKKFRCSA). Intrachain disulfides connect cysteine 434–cysteine 457, cysteine 436–cysteine 478, cysteine 506–cysteine 512, and cysteine 510–cysteine 519. Residues 497-533 (SGDCFADLACPEKCRCEGTTVDCSNQKLNKIPEHIPQ) form the LRRNT 3 domain. LRR repeat units lie at residues 534–555 (YTAE…GIFK), 559–580 (QLRK…AFEG), 583–604 (GVNE…MFKG), 607–628 (SLKT…SFIG), and 631–652 (SVRL…AFDT). Residue asparagine 564 is glycosylated (N-linked (GlcNAc...) asparagine). Asparagine 623 carries N-linked (GlcNAc...) asparagine glycosylation. The 51-residue stretch at 664-714 (NPFNCNCYLAWLGEWLRKKRIVTGNPRCQKPYFLKEIPIQDVAIQDFTCDD) folds into the LRRCT 3 domain. 4 disulfide bridges follow: cysteine 668–cysteine 691, cysteine 670–cysteine 712, cysteine 727–cysteine 733, and cysteine 731–cysteine 740. One can recognise an LRRNT 4 domain in the interval 718-754 (DNSCSPLSRCPTECTCLDTVVRCSNKGLKVLPKGIPR). LRR repeat units lie at residues 755–777 (DVTE…SNYK), 778–799 (HLTL…SFSN), 802–823 (QLLT…TFDG), and 826–847 (SLRL…AFND). N-linked (GlcNAc...) asparagine glycosylation is found at asparagine 794 and asparagine 799. The region spanning 859–909 (NPLYCDCNMQWLSDWVKSEYKEPGIARCAGPGEMADKLLLTTPSKKFTCQG) is the LRRCT 4 domain. 20 disulfide bridges follow: cysteine 863–cysteine 886, cysteine 865–cysteine 907, cysteine 922–cysteine 933, cysteine 927–cysteine 943, cysteine 945–cysteine 954, cysteine 961–cysteine 972, cysteine 966–cysteine 984, cysteine 986–cysteine 995, cysteine 1002–cysteine 1013, cysteine 1007–cysteine 1022, cysteine 1024–cysteine 1033, cysteine 1040–cysteine 1053, cysteine 1047–cysteine 1062, cysteine 1064–cysteine 1073, cysteine 1080–cysteine 1091, cysteine 1085–cysteine 1100, cysteine 1102–cysteine 1111, cysteine 1125–cysteine 1136, cysteine 1130–cysteine 1145, and cysteine 1147–cysteine 1156. EGF-like domains are found at residues 918-955 (KCNP…QDCD) and 957-996 (PIHA…ENCE). The EGF-like 3; calcium-binding domain maps to 998-1034 (NVDDCEDNDCENNSTCVDGINNYTCLCPPEYTGELCE). N-linked (GlcNAc...) asparagine glycosylation is found at asparagine 1009, asparagine 1010, and asparagine 1019. The region spanning 1036–1074 (KLDFCAQDLNPCQHDSKCILTPKGFKCDCTPGYVGEHCD) is the EGF-like 4 domain. The region spanning 1076–1112 (DFDDCQDNKCKNGAHCTDAVNGYTCICPEGYSGLFCE) is the EGF-like 5; calcium-binding domain. The region spanning 1121 to 1157 (RTSPCDNFDCQNGAQCIVRINEPICQCLPGYQGEKCE) is the EGF-like 6 domain. A Laminin G-like domain is found at 1160–1333 (VSVNFINKES…PMQTGILPGC (174 aa)). 3 N-linked (GlcNAc...) asparagine glycosylation sites follow: asparagine 1183, asparagine 1266, and asparagine 1300. Cystine bridges form between cysteine 1307/cysteine 1333, cysteine 1336/cysteine 1346, cysteine 1341/cysteine 1356, cysteine 1358/cysteine 1367, cysteine 1375/cysteine 1385, cysteine 1380/cysteine 1395, cysteine 1397/cysteine 1406, cysteine 1416/cysteine 1426, cysteine 1421/cysteine 1436, cysteine 1438/cysteine 1447, cysteine 1453/cysteine 1492, cysteine 1471/cysteine 1506, cysteine 1482/cysteine 1522, and cysteine 1486/cysteine 1524. Residues 1332–1368 (GCEPCHKKVCAHGTCQPSSQAGFTCECQEGWMGPLCD) enclose the EGF-like 7 domain. A CTCK domain is found at 1453 to 1528 (CRGERIRDYY…VVKCGCTRCV (76 aa)).

In terms of assembly, interacts with GREM1. Homodimer. Binds ROBO1 and ROBO2 with high affinity. In terms of tissue distribution, fetal lung and kidney, and adult spinal cord. Weak expression in adult adrenal gland, thyroid, trachea and other tissues examined.

It is found in the secreted. Thought to act as molecular guidance cue in cellular migration, and function appears to be mediated by interaction with roundabout homolog receptors. During neural development involved in axonal navigation at the ventral midline of the neural tube and projection of axons to different regions. SLIT1 and SLIT2 seem to be essential for midline guidance in the forebrain by acting as repulsive signal preventing inappropriate midline crossing by axons projecting from the olfactory bulb. In spinal cord development may play a role in guiding commissural axons once they reached the floor plate by modulating the response to netrin. In vitro, silences the attractive effect of NTN1 but not its growth-stimulatory effect and silencing requires the formation of a ROBO1-DCC complex. May be implicated in spinal cord midline post-crossing axon repulsion. In vitro, only commissural axons that crossed the midline responded to SLIT2. In the developing visual system appears to function as repellent for retinal ganglion axons by providing a repulsion that directs these axons along their appropriate paths prior to, and after passage through, the optic chiasm. In vitro, collapses and repels retinal ganglion cell growth cones. Seems to play a role in branching and arborization of CNS sensory axons, and in neuronal cell migration. In vitro, Slit homolog 2 protein N-product, but not Slit homolog 2 protein C-product, repels olfactory bulb (OB) but not dorsal root ganglia (DRG) axons, induces OB growth cones collapse and induces branching of DRG axons. Seems to be involved in regulating leukocyte migration. This chain is Slit homolog 2 protein (SLIT2), found in Homo sapiens (Human).